A 557-amino-acid chain; its full sequence is Urocanate hydratase (557 aa).

NAD(+)-binding positions include 53–54 (GG), Q131, 177–179 (GMG), E197, R202, 243–244 (NA), 264–268 (QTSAH), 274–275 (YL), and Y323. The active site involves C411. Residue G493 coordinates NAD(+).

Belongs to the urocanase family. NAD(+) serves as cofactor.

It localises to the cytoplasm. It catalyses the reaction 4-imidazolone-5-propanoate = trans-urocanate + H2O. Its pathway is amino-acid degradation; L-histidine degradation into L-glutamate; N-formimidoyl-L-glutamate from L-histidine: step 2/3. Catalyzes the conversion of urocanate to 4-imidazolone-5-propionate. In Pseudomonas entomophila (strain L48), this protein is Urocanate hydratase.